The following is a 285-amino-acid chain: ATP synthase gamma chain (285 aa).

It belongs to the ATPase gamma chain family. In terms of assembly, F-type ATPases have 2 components, CF(1) - the catalytic core - and CF(0) - the membrane proton channel. CF(1) has five subunits: alpha(3), beta(3), gamma(1), delta(1), epsilon(1). CF(0) has three main subunits: a, b and c.

It localises to the cell membrane. Its function is as follows. Produces ATP from ADP in the presence of a proton gradient across the membrane. The gamma chain is believed to be important in regulating ATPase activity and the flow of protons through the CF(0) complex. This Dehalococcoides mccartyi (strain CBDB1) protein is ATP synthase gamma chain.